The primary structure comprises 337 residues: Phenylalanine--tRNA ligase alpha subunit (337 aa).

Glutamate 258 is a binding site for Mg(2+).

The protein belongs to the class-II aminoacyl-tRNA synthetase family. Phe-tRNA synthetase alpha subunit type 1 subfamily. In terms of assembly, tetramer of two alpha and two beta subunits. Mg(2+) is required as a cofactor.

The protein localises to the cytoplasm. The enzyme catalyses tRNA(Phe) + L-phenylalanine + ATP = L-phenylalanyl-tRNA(Phe) + AMP + diphosphate + H(+). The polypeptide is Phenylalanine--tRNA ligase alpha subunit (Burkholderia thailandensis (strain ATCC 700388 / DSM 13276 / CCUG 48851 / CIP 106301 / E264)).